Here is a 125-residue protein sequence, read N- to C-terminus: Meiotically up-regulated gene 112 protein (125 aa).

It localises to the golgi apparatus. Its function is as follows. Has a role in meiosis. The chain is Meiotically up-regulated gene 112 protein (mug112) from Schizosaccharomyces pombe (strain 972 / ATCC 24843) (Fission yeast).